The sequence spans 353 residues: F-box protein At3g58530 (353 aa).

The F-box; degenerate domain maps to 8-56 (EEEEETWRREIVTSVMRLVSTRLPQTDLISLLLVSPWLYRTLISYPSIW).

In Arabidopsis thaliana (Mouse-ear cress), this protein is F-box protein At3g58530.